We begin with the raw amino-acid sequence, 388 residues long: Succinate--CoA ligase [ADP-forming] subunit beta (388 aa).

Residues 9–244 (KQLFAEYGLP…PSQDDAREAH (236 aa)) enclose the ATP-grasp domain. ATP is bound by residues lysine 46, 53-55 (GRG), glutamate 99, threonine 102, and glutamate 107. Residues asparagine 199 and aspartate 213 each contribute to the Mg(2+) site. Substrate-binding positions include asparagine 264 and 321–323 (GIV).

It belongs to the succinate/malate CoA ligase beta subunit family. Heterotetramer of two alpha and two beta subunits. Mg(2+) serves as cofactor.

The catalysed reaction is succinate + ATP + CoA = succinyl-CoA + ADP + phosphate. It carries out the reaction GTP + succinate + CoA = succinyl-CoA + GDP + phosphate. It functions in the pathway carbohydrate metabolism; tricarboxylic acid cycle; succinate from succinyl-CoA (ligase route): step 1/1. Functionally, succinyl-CoA synthetase functions in the citric acid cycle (TCA), coupling the hydrolysis of succinyl-CoA to the synthesis of either ATP or GTP and thus represents the only step of substrate-level phosphorylation in the TCA. The beta subunit provides nucleotide specificity of the enzyme and binds the substrate succinate, while the binding sites for coenzyme A and phosphate are found in the alpha subunit. The protein is Succinate--CoA ligase [ADP-forming] subunit beta of Pseudomonas aeruginosa (strain LESB58).